A 349-amino-acid chain; its full sequence is Phosphoribosylformylglycinamidine cyclo-ligase (349 aa).

The protein belongs to the AIR synthase family.

The protein localises to the cytoplasm. The catalysed reaction is 2-formamido-N(1)-(5-O-phospho-beta-D-ribosyl)acetamidine + ATP = 5-amino-1-(5-phospho-beta-D-ribosyl)imidazole + ADP + phosphate + H(+). The protein operates within purine metabolism; IMP biosynthesis via de novo pathway; 5-amino-1-(5-phospho-D-ribosyl)imidazole from N(2)-formyl-N(1)-(5-phospho-D-ribosyl)glycinamide: step 2/2. This chain is Phosphoribosylformylglycinamidine cyclo-ligase, found in Listeria monocytogenes serotype 4a (strain HCC23).